A 537-amino-acid polypeptide reads, in one-letter code: Eukaryotic translation initiation factor 3 subunit L (537 aa).

The 213-residue stretch at 300–512 (TFSSILLYIQ…IHIADTKVSH (213 aa)) folds into the PCI domain.

Belongs to the eIF-3 subunit L family. As to quaternary structure, component of the eukaryotic translation initiation factor 3 (eIF-3) complex.

The protein resides in the cytoplasm. In terms of biological role, component of the eukaryotic translation initiation factor 3 (eIF-3) complex, which is involved in protein synthesis of a specialized repertoire of mRNAs and, together with other initiation factors, stimulates binding of mRNA and methionyl-tRNAi to the 40S ribosome. The eIF-3 complex specifically targets and initiates translation of a subset of mRNAs involved in cell proliferation. In Culex quinquefasciatus (Southern house mosquito), this protein is Eukaryotic translation initiation factor 3 subunit L.